The following is a 476-amino-acid chain: Bifunctional protein HldE (476 aa).

The ribokinase stretch occupies residues Met1–Ser319. An ATP-binding site is contributed by Asn195–Glu198. Asp264 is a catalytic residue. Residues Met345–Gln476 are cytidylyltransferase.

It in the N-terminal section; belongs to the carbohydrate kinase PfkB family. This sequence in the C-terminal section; belongs to the cytidylyltransferase family. Homodimer.

It catalyses the reaction D-glycero-beta-D-manno-heptose 7-phosphate + ATP = D-glycero-beta-D-manno-heptose 1,7-bisphosphate + ADP + H(+). The enzyme catalyses D-glycero-beta-D-manno-heptose 1-phosphate + ATP + H(+) = ADP-D-glycero-beta-D-manno-heptose + diphosphate. The protein operates within nucleotide-sugar biosynthesis; ADP-L-glycero-beta-D-manno-heptose biosynthesis; ADP-L-glycero-beta-D-manno-heptose from D-glycero-beta-D-manno-heptose 7-phosphate: step 1/4. It participates in nucleotide-sugar biosynthesis; ADP-L-glycero-beta-D-manno-heptose biosynthesis; ADP-L-glycero-beta-D-manno-heptose from D-glycero-beta-D-manno-heptose 7-phosphate: step 3/4. Its function is as follows. Catalyzes the phosphorylation of D-glycero-D-manno-heptose 7-phosphate at the C-1 position to selectively form D-glycero-beta-D-manno-heptose-1,7-bisphosphate. Functionally, catalyzes the ADP transfer from ATP to D-glycero-beta-D-manno-heptose 1-phosphate, yielding ADP-D-glycero-beta-D-manno-heptose. The chain is Bifunctional protein HldE from Shewanella putrefaciens (strain CN-32 / ATCC BAA-453).